The primary structure comprises 331 residues: Geranylgeranyl transferase type-2 subunit beta (331 aa).

The residue at position 2 (G2) is an N-acetylglycine. Residue T3 is modified to Phosphothreonine. PFTB repeat units follow at residues 20-61, 68-109, 116-157, 164-205, 212-253, and 260-302; these read LEKH…DLMG, REEI…TLYD, INKV…ALLG, VEKA…AITS, SDLL…KIIG, and REKL…SLLG. 190–192 serves as a coordination point for geranylgeranyl diphosphate; that stretch reads HAG. D238 and C240 together coordinate Zn(2+). Residue 241-244 coordinates geranylgeranyl diphosphate; that stretch reads YSWW. H290 serves as a coordination point for Zn(2+).

Belongs to the protein prenyltransferase subunit beta family. Heterotrimer composed of RABGGTA, RABGGTB and CHM; within this trimer, RABGGTA and RABGGTB form the catalytic component B, while CHM (component A) mediates peptide substrate binding. The Rab GGTase dimer (RGGT) interacts with CHM (component A) prior to Rab protein binding; the association is stabilized by geranylgeranyl pyrophosphate (GGpp). The CHM:RGGT:Rab complex is destabilized by GGpp. Interaction of RABGGTB with prenylated PTP4A2 precludes its association with RABGGTA and inhibits enzyme activity. Interacts with CHODL. Interacts with non-phosphorylated form of RAB8A; phosphorylation of RAB8A at 'Thr-72' disrupts this interaction. Requires Zn(2+) as cofactor.

The catalysed reaction is geranylgeranyl diphosphate + L-cysteinyl-[protein] = S-geranylgeranyl-L-cysteinyl-[protein] + diphosphate. With respect to regulation, the enzymatic reaction requires the aid of a Rab escort protein (also called component A). Its function is as follows. Catalyzes the transfer of a geranylgeranyl moiety from geranylgeranyl diphosphate to both cysteines of Rab proteins with the C-terminal sequence -XXCC, -XCXC and -CCXX, such as RAB1A, RAB3A, RAB5A and RAB7A. The polypeptide is Geranylgeranyl transferase type-2 subunit beta (RABGGTB) (Bos taurus (Bovine)).